A 492-amino-acid chain; its full sequence is N-succinylglutamate 5-semialdehyde dehydrogenase (492 aa).

220 to 225 (GSANTG) lines the NAD(+) pocket. Active-site residues include Glu-243 and Cys-277.

The protein belongs to the aldehyde dehydrogenase family. AstD subfamily.

The enzyme catalyses N-succinyl-L-glutamate 5-semialdehyde + NAD(+) + H2O = N-succinyl-L-glutamate + NADH + 2 H(+). The protein operates within amino-acid degradation; L-arginine degradation via AST pathway; L-glutamate and succinate from L-arginine: step 4/5. In terms of biological role, catalyzes the NAD-dependent reduction of succinylglutamate semialdehyde into succinylglutamate. The protein is N-succinylglutamate 5-semialdehyde dehydrogenase of Shigella flexneri.